The sequence spans 503 residues: Maturase K (503 aa).

The protein belongs to the intron maturase 2 family. MatK subfamily.

Its subcellular location is the plastid. It is found in the chloroplast. Its function is as follows. Usually encoded in the trnK tRNA gene intron. Probably assists in splicing its own and other chloroplast group II introns. This is Maturase K from Rhamnus cathartica (Common buckthorn).